Consider the following 940-residue polypeptide: Isoleucine--tRNA ligase (940 aa).

Positions 58–68 (PYANGSIHIGH) match the 'HIGH' region motif. Glu-564 provides a ligand contact to L-isoleucyl-5'-AMP. A 'KMSKS' region motif is present at residues 605-609 (KMSKS). Lys-608 contacts ATP. 4 residues coordinate Zn(2+): Cys-903, Cys-906, Cys-923, and Cys-926.

This sequence belongs to the class-I aminoacyl-tRNA synthetase family. IleS type 1 subfamily. Monomer. It depends on Zn(2+) as a cofactor.

The protein localises to the cytoplasm. It catalyses the reaction tRNA(Ile) + L-isoleucine + ATP = L-isoleucyl-tRNA(Ile) + AMP + diphosphate. In terms of biological role, catalyzes the attachment of isoleucine to tRNA(Ile). As IleRS can inadvertently accommodate and process structurally similar amino acids such as valine, to avoid such errors it has two additional distinct tRNA(Ile)-dependent editing activities. One activity is designated as 'pretransfer' editing and involves the hydrolysis of activated Val-AMP. The other activity is designated 'posttransfer' editing and involves deacylation of mischarged Val-tRNA(Ile). This Shewanella putrefaciens (strain CN-32 / ATCC BAA-453) protein is Isoleucine--tRNA ligase.